The chain runs to 290 residues: Phosphatidylglycerol--prolipoprotein diacylglyceryl transferase (290 aa).

A run of 7 helical transmembrane segments spans residues 21–41 (VSLHWYGLMYLVGFVFAMWLA), 60–80 (LLYAGFLGVFIGGRVGYVLFY), 96–116 (WDGGMSFHGGLIGVICVMLWF), 124–144 (FFQVADFIAPLIPFGLGAGRL), 199–219 (SQLYEMILEGVVLFIILNVFI), 226–246 (GSVSGLFLIGYGTFRIIVECF), and 260–280 (ISMGQILSVPMILAGIIMMIW). R143 contributes to the a 1,2-diacyl-sn-glycero-3-phospho-(1'-sn-glycerol) binding site.

The protein belongs to the Lgt family.

The protein resides in the cell inner membrane. It carries out the reaction L-cysteinyl-[prolipoprotein] + a 1,2-diacyl-sn-glycero-3-phospho-(1'-sn-glycerol) = an S-1,2-diacyl-sn-glyceryl-L-cysteinyl-[prolipoprotein] + sn-glycerol 1-phosphate + H(+). It functions in the pathway protein modification; lipoprotein biosynthesis (diacylglyceryl transfer). Catalyzes the transfer of the diacylglyceryl group from phosphatidylglycerol to the sulfhydryl group of the N-terminal cysteine of a prolipoprotein, the first step in the formation of mature lipoproteins. This is Phosphatidylglycerol--prolipoprotein diacylglyceryl transferase from Yersinia pseudotuberculosis serotype O:1b (strain IP 31758).